An 89-amino-acid polypeptide reads, in one-letter code: Small ribosomal subunit protein uS15 (89 aa).

The protein belongs to the universal ribosomal protein uS15 family. In terms of assembly, part of the 30S ribosomal subunit. Forms a bridge to the 50S subunit in the 70S ribosome, contacting the 23S rRNA.

In terms of biological role, one of the primary rRNA binding proteins, it binds directly to 16S rRNA where it helps nucleate assembly of the platform of the 30S subunit by binding and bridging several RNA helices of the 16S rRNA. Its function is as follows. Forms an intersubunit bridge (bridge B4) with the 23S rRNA of the 50S subunit in the ribosome. The chain is Small ribosomal subunit protein uS15 from Xanthobacter autotrophicus (strain ATCC BAA-1158 / Py2).